The following is a 345-amino-acid chain: Homeobox protein DBX1 (345 aa).

Disordered regions lie at residues 55 to 103 (PRGS…VSPA) and 241 to 345 (KERE…ITVS). A DNA-binding region (homeobox) is located at residues 182–241 (GMLRRAVFSDVQRKALEKMFQKQKYISKPDRKKLAAKLGLKDSQVKIWFQNRRMKWRNSK). Basic and acidic residues predominate over residues 300-309 (DPRHLRDPRL). A compositionally biased stretch (acidic residues) spans 330 to 345 (SDSEDDEEGEEEITVS).

The protein belongs to the H2.0 homeobox family.

The protein localises to the nucleus. Its function is as follows. Could have a role in patterning the central nervous system during embryogenesis. Has a key role in regulating the distinct phenotypic features that distinguish two major classes of ventral interneurons, V0 and V1 neurons. Regulates the transcription factor profile, neurotransmitter phenotype, intraspinal migratory path and axonal trajectory of V0 neurons, features that differentiate them from an adjacent set of V1 neurons. This chain is Homeobox protein DBX1 (DBX1), found in Bos taurus (Bovine).